The primary structure comprises 176 residues: Ribosome maturation factor RimM (176 aa).

The PRC barrel domain maps to 93-170 (DGEYYHADLI…ELPTEIEGDT (78 aa)).

Belongs to the RimM family. As to quaternary structure, binds ribosomal protein uS19.

It localises to the cytoplasm. In terms of biological role, an accessory protein needed during the final step in the assembly of 30S ribosomal subunit, possibly for assembly of the head region. Essential for efficient processing of 16S rRNA. May be needed both before and after RbfA during the maturation of 16S rRNA. It has affinity for free ribosomal 30S subunits but not for 70S ribosomes. The polypeptide is Ribosome maturation factor RimM (Rhodopseudomonas palustris (strain BisB5)).